The sequence spans 206 residues: Small ribosomal subunit protein uS5 (206 aa).

Residues 1–15 (MTDTPTKQEIQSKND) show a composition bias toward polar residues. Residues 1–50 (MTDTPTKQEIQSKNDNVPGATPVEQKKNNRNDRKRNRRGDSKNLERDSDW) are disordered. The span at 38 to 50 (RGDSKNLERDSDW) shows a compositional bias: basic and acidic residues. The 64-residue stretch at 50–113 (WQERVVQIRR…SDGKKNLVRV (64 aa)) folds into the S5 DRBM domain.

The protein belongs to the universal ribosomal protein uS5 family. Part of the 30S ribosomal subunit. Contacts proteins S4 and S8.

Functionally, with S4 and S12 plays an important role in translational accuracy. Located at the back of the 30S subunit body where it stabilizes the conformation of the head with respect to the body. The sequence is that of Small ribosomal subunit protein uS5 from Prochlorococcus marinus (strain MIT 9301).